Reading from the N-terminus, the 357-residue chain is DNA polymerase IV (357 aa).

Residues 4–185 enclose the UmuC domain; sequence IIHCDCDCFY…LPVERLFGVG (182 aa). Residues Asp-8 and Asp-103 each coordinate Mg(2+). Glu-104 is a catalytic residue.

It belongs to the DNA polymerase type-Y family. As to quaternary structure, monomer. Requires Mg(2+) as cofactor.

The protein resides in the cytoplasm. It carries out the reaction DNA(n) + a 2'-deoxyribonucleoside 5'-triphosphate = DNA(n+1) + diphosphate. In terms of biological role, poorly processive, error-prone DNA polymerase involved in untargeted mutagenesis. Copies undamaged DNA at stalled replication forks, which arise in vivo from mismatched or misaligned primer ends. These misaligned primers can be extended by PolIV. Exhibits no 3'-5' exonuclease (proofreading) activity. May be involved in translesional synthesis, in conjunction with the beta clamp from PolIII. The polypeptide is DNA polymerase IV (Ralstonia nicotianae (strain ATCC BAA-1114 / GMI1000) (Ralstonia solanacearum)).